A 902-amino-acid chain; its full sequence is Glutamate receptor 4 (902 aa).

A signal peptide spans 1 to 20 (MRIICRQIVLLFSGFWGLAM). At 22-544 (AFPSSVQIGG…GVFSFLDPLA (523 aa)) the chain is on the extracellular side. Asn-52, Asn-56, Asn-258, Asn-371, Asn-407, and Asn-414 each carry an N-linked (GlcNAc...) asparagine glycan. Cys-84 and Cys-331 are joined by a disulfide. Pro-500, Thr-502, and Arg-507 together coordinate L-glutamate. Residues 545 to 565 (YEIWMCIVFAYIGVSVVLFLV) traverse the membrane as a helical segment. The Cytoplasmic portion of the chain corresponds to 566-592 (SRFSPYEWHTEEPEDGKEGPSDQPPNE). Residues 593 to 608 (FGIFNSLWFSLGAFMQ) constitute an intramembrane region (helical; Pore-forming). Residues 609–611 (QGC) lie within the membrane without spanning it. The S-palmitoyl cysteine moiety is linked to residue Cys-611. Over 612–617 (DISPRS) the chain is Cytoplasmic. Residues 618-638 (LSGRIVGGVWWFFTLIIISSY) form a helical membrane-spanning segment. Residues 639–813 (TANLAAFLTV…DKTSALSLSN (175 aa)) lie on the Extracellular side of the membrane. Residues Ser-676, Thr-677, and Glu-727 each contribute to the L-glutamate site. A disulfide bridge links Cys-740 with Cys-795. The chain crosses the membrane as a helical span at residues 814 to 834 (VAGVFYILVGGLGLAMLVALI). Residues 835-902 (EFCYKSRAEA…GLAVIASDLP (68 aa)) lie on the Cytoplasmic side of the membrane. Cys-837 carries the S-palmitoyl cysteine lipid modification. Ser-862 is subject to Phosphoserine; by PKC/PRKCG.

This sequence belongs to the glutamate-gated ion channel (TC 1.A.10.1) family. GRIA4 subfamily. In terms of assembly, homotetramer or heterotetramer of pore-forming glutamate receptor subunits. Tetramers may be formed by the dimerization of dimers. Interacts with EPB41L1 via its C-terminus. Isoform 3 interacts with PICK1. Found in a complex with GRIA1, GRIA2, GRIA3, CNIH2, CNIH3, CACNG2, CACNG3, CACNG4, CACNG5, CACNG7 and CACNG8. Interacts with CACNG5 and PRKCG. Found in a complex with GRIA1, GRIA2, GRIA3, DLG4, CACNG8 and CNIH2. Palmitoylated. Depalmitoylated upon L-glutamate stimulation. ZDHHC3/GODZ specifically palmitoylates Cys-611, which leads to Golgi retention and decreased cell surface expression. In contrast, Cys-837 palmitoylation does not affect cell surface expression but regulates stimulation-dependent endocytosis. Post-translationally, phosphorylated at Ser-862 by PRKCG; phosphorylation increases plasma membrane-associated GRI4 expression. Detected in cerebellum.

It localises to the cell membrane. The protein resides in the postsynaptic cell membrane. The protein localises to the cell projection. Its subcellular location is the dendrite. It carries out the reaction Ca(2+)(in) = Ca(2+)(out). It catalyses the reaction Na(+)(in) = Na(+)(out). The enzyme catalyses Mg(2+)(in) = Mg(2+)(out). Ionotropic glutamate receptor that functions as a ligand-gated cation channel, gated by L-glutamate and glutamatergic agonists such as alpha-amino-3-hydroxy-5-methyl-4-isoxazolepropionic acid (AMPA), quisqualic acid, and kainic acid. L-glutamate acts as an excitatory neurotransmitter at many synapses in the central nervous system and plays an important role in fast excitatory synaptic transmission. Binding of the excitatory neurotransmitter L-glutamate induces a conformation change, leading to the opening of the cation channel, and thereby converts the chemical signal to an electrical impulse upon entry of monovalent and divalent cations such as sodium and calcium. The receptor then desensitizes rapidly and enters a transient inactive state, characterized by the presence of bound agonist. In the presence of CACNG8, shows resensitization which is characterized by a delayed accumulation of current flux upon continued application of L-glutamate. The sequence is that of Glutamate receptor 4 from Rattus norvegicus (Rat).